The chain runs to 307 residues: Dihydroorotate dehydrogenase A (fumarate) (307 aa).

Residues S21 and K46–T47 each bind FMN. Substrate is bound by residues K46, N70–L74, and N130. N130 lines the FMN pocket. The Nucleophile role is filled by C133. FMN contacts are provided by K168 and I194. Substrate is bound at residue N195 to T196. FMN contacts are provided by residues G220, G246–G247, and G268–S269.

It belongs to the dihydroorotate dehydrogenase family. Type 1 subfamily. Homodimer. Requires FMN as cofactor.

It is found in the cytoplasm. It catalyses the reaction (S)-dihydroorotate + fumarate = orotate + succinate. It functions in the pathway pyrimidine metabolism; UMP biosynthesis via de novo pathway. Functionally, catalyzes the conversion of dihydroorotate to orotate with fumarate as the electron acceptor. This is Dihydroorotate dehydrogenase A (fumarate) (pyrD) from Lactobacillus delbrueckii subsp. bulgaricus (strain ATCC 11842 / DSM 20081 / BCRC 10696 / JCM 1002 / NBRC 13953 / NCIMB 11778 / NCTC 12712 / WDCM 00102 / Lb 14).